The chain runs to 259 residues: Haloacid dehalogenase-like hydrolase domain-containing protein 2 (259 aa).

Mg(2+)-binding residues include Asp13 and Asn15. Substrate is bound by residues 13–15 (DLN) and 46–47 (TN). A coiled-coil region spans residues 47–72 (NTTKESKKDLLERLKKLEFEISEDEI). Lys50 carries the N6-succinyllysine modification. Lys179 serves as a coordination point for substrate. Asp204 is a binding site for Mg(2+).

The protein belongs to the HAD-like hydrolase superfamily. It depends on Mg(2+) as a cofactor.

The sequence is that of Haloacid dehalogenase-like hydrolase domain-containing protein 2 (Hdhd2) from Mus musculus (Mouse).